Here is a 359-residue protein sequence, read N- to C-terminus: Alanine racemase, biosynthetic (359 aa).

Catalysis depends on Lys-34, which acts as the Proton acceptor; specific for D-alanine. At Lys-34 the chain carries N6-(pyridoxal phosphate)lysine. Substrate is bound at residue Arg-129. Tyr-255 functions as the Proton acceptor; specific for L-alanine in the catalytic mechanism. Residue Met-303 participates in substrate binding.

This sequence belongs to the alanine racemase family. In terms of assembly, monomer but homodimer in the presence of the substrate. It depends on pyridoxal 5'-phosphate as a cofactor.

It carries out the reaction L-alanine = D-alanine. It participates in amino-acid biosynthesis; D-alanine biosynthesis; D-alanine from L-alanine: step 1/1. Its pathway is cell wall biogenesis; peptidoglycan biosynthesis. Catalyzes the interconversion of L-alanine and D-alanine. The protein is Alanine racemase, biosynthetic (alr) of Shigella dysenteriae.